We begin with the raw amino-acid sequence, 431 residues long: Acrosin (431 aa).

Residues 1-16 form the signal peptide; that stretch reads MLPTAVLLVLVVSVVA. Residue N19 is glycosylated (N-linked (GlcNAc...) asparagine). 6 disulfide bridges follow: C22-C152, C26-C160, C71-C87, C175-C244, C207-C223, and C234-C264. The 249-residue stretch at 40–288 folds into the Peptidase S1 domain; it reads VVGGQAAQQG…FLDWIASRIG (249 aa). Residues H86 and D140 each act as charge relay system in the active site. N-linked (GlcNAc...) asparagine glycosylation occurs at N208. The active-site Charge relay system is the S238. The interval 295 to 385 is disordered; the sequence is IQPATPTPPT…PPPASTKPPQ (91 aa). Basic residues predominate over residues 331–341; that stretch reads PHPHPHPHPHP. Residues 342-381 show a composition bias toward pro residues; sequence RPPQPPAAQAPPPPPPPPPPPPPPPPPPPPPPPPPPPAST. The propeptide at 351 to 431 is pro-rich; that stretch reads APPPPPPPPP…TEIPEVTLAS (81 aa).

This sequence belongs to the peptidase S1 family. Heavy chain (catalytic) and a light chain linked by two disulfide bonds. Forms a heterodimer with SERPINA5.

The enzyme catalyses Preferential cleavage: Arg-|-Xaa, Lys-|-Xaa.. With respect to regulation, inhibited by SERPINA5. Functionally, acrosin is the major protease of mammalian spermatozoa. It is a serine protease of trypsin-like cleavage specificity, it is synthesized in a zymogen form, proacrosin and stored in the acrosome. The protein is Acrosin (ACR) of Oryctolagus cuniculus (Rabbit).